The chain runs to 304 residues: NADH-cytochrome b5 reductase 2 (304 aa).

Residues 6–26 (GTPVVVAVAAVAATVLLLLLL) form a helical membrane-spanning segment. The region spanning 43 to 155 (QAKYPLPLVG…RGPNGLLVYK (113 aa)) is the FAD-binding FR-type domain. Residues 135–165 (DSMK…IKPD) and 174–209 (FAKH…KCYL) contribute to the FAD site.

This sequence belongs to the flavoprotein pyridine nucleotide cytochrome reductase family. FAD is required as a cofactor.

The protein localises to the membrane. The catalysed reaction is 2 Fe(III)-[cytochrome b5] + NADH = 2 Fe(II)-[cytochrome b5] + NAD(+) + H(+). Functionally, NADH-cytochrome b5 reductases are involved in desaturation and elongation of fatty acids, cholesterol biosynthesis and drug metabolism. This is NADH-cytochrome b5 reductase 2 (CYB5R2) from Gallus gallus (Chicken).